Reading from the N-terminus, the 699-residue chain is MPAVSRPLPPLTALAPPELEWRADDISDAPYASAYGDVYFSRHDGRAETGHVFVEGNRLPERFAAWRETRAFVIGETGFGTGLNMLCAWACFERHAPAEARLHLVSTEKYPLPRDALARALAIWPDMAARAGVLLDQWPEPVGGVHRLWLSSRVVLDLHFGDAAERLSRLDGRVDAWFLDGFSPAKNPDMWQPELFAAMAQVSRPGATFATFTCAGVVKRGLRDAGFTWRKTPGFGRKREMLCGEIAAPPDDRRRASTPWFTPPRARPARHVVVIGAGLAGTSVAAALARRGVAVTLLERDAPGAGASGNRQGALYVKLAAETNPQSRVYLAGLLYTRRWLTALDPEQRLWQDCGVLQLAPGDKEATRQQRFLAHHALPERVLHGVDAATASQAAGTPLDAPGLDYPQAGWVRPDRLCQQLAASPGITQRRGEAHDLDFDADADAWRIALTDGSTLTADHVVVATAHEAPRFTPLAGLPLKPIRGQLTHVPVPADAPSLARVVCAGGYVAPAMEGVLSLGATFAPGDTDTAVRTTDHARNLDEFTATLPAFAEALRAAGVTLDPAACEGRASLRAASPDKSPYAGPVPVREAWLDDYAVLGADARRVPSTAGRHHPGLWVSAAHGSRGLASAPLCAEVIASRLCDEPLPLERELIDHLHPGRRLIADIIRGNATRGNATLSTSSPNDDAQPSPTTTETP.

The interval Met-1–Ala-247 is tRNA (mnm(5)s(2)U34)-methyltransferase. Residues Ile-275–Pro-699 are FAD-dependent cmnm(5)s(2)U34 oxidoreductase. Residues Arg-675–Pro-699 are disordered.

It in the N-terminal section; belongs to the methyltransferase superfamily. tRNA (mnm(5)s(2)U34)-methyltransferase family. In the C-terminal section; belongs to the DAO family. The cofactor is FAD.

It localises to the cytoplasm. The catalysed reaction is 5-aminomethyl-2-thiouridine(34) in tRNA + S-adenosyl-L-methionine = 5-methylaminomethyl-2-thiouridine(34) in tRNA + S-adenosyl-L-homocysteine + H(+). Its function is as follows. Catalyzes the last two steps in the biosynthesis of 5-methylaminomethyl-2-thiouridine (mnm(5)s(2)U) at the wobble position (U34) in tRNA. Catalyzes the FAD-dependent demodification of cmnm(5)s(2)U34 to nm(5)s(2)U34, followed by the transfer of a methyl group from S-adenosyl-L-methionine to nm(5)s(2)U34, to form mnm(5)s(2)U34. This is tRNA 5-methylaminomethyl-2-thiouridine biosynthesis bifunctional protein MnmC from Chromohalobacter salexigens (strain ATCC BAA-138 / DSM 3043 / CIP 106854 / NCIMB 13768 / 1H11).